Reading from the N-terminus, the 212-residue chain is ATP phosphoribosyltransferase (212 aa).

Belongs to the ATP phosphoribosyltransferase family. Short subfamily. Heteromultimer composed of HisG and HisZ subunits.

It localises to the cytoplasm. It catalyses the reaction 1-(5-phospho-beta-D-ribosyl)-ATP + diphosphate = 5-phospho-alpha-D-ribose 1-diphosphate + ATP. Its pathway is amino-acid biosynthesis; L-histidine biosynthesis; L-histidine from 5-phospho-alpha-D-ribose 1-diphosphate: step 1/9. In terms of biological role, catalyzes the condensation of ATP and 5-phosphoribose 1-diphosphate to form N'-(5'-phosphoribosyl)-ATP (PR-ATP). Has a crucial role in the pathway because the rate of histidine biosynthesis seems to be controlled primarily by regulation of HisG enzymatic activity. The polypeptide is ATP phosphoribosyltransferase (Clostridium novyi (strain NT)).